A 464-amino-acid polypeptide reads, in one-letter code: Protein FAM90A24 (464 aa).

3 disordered regions span residues 1–42 (MMAR…DPRL), 69–389 (VPAT…HDGA), and 415–437 (HSPEKPGAFLAQSPHVSEKSEAP). Composition is skewed to basic and acidic residues over residues 74–89 (GKKEGKENLKPWKPRG) and 97–114 (NKDKGEKEERPRQQDPQR). Low complexity predominate over residues 180-197 (LASLSPLRKASLSSSSSL).

This sequence belongs to the FAM90 family.

The sequence is that of Protein FAM90A24 from Homo sapiens (Human).